Here is a 553-residue protein sequence, read N- to C-terminus: LIM domain-containing protein B (553 aa).

Residues 43 to 115 (LTYKDPNVST…SINNNISNNN (73 aa)) are disordered. Residues 99 to 114 (GPGLPNNSINNNISNN) are compositionally biased toward low complexity. LIM zinc-binding domains follow at residues 205 to 262 (PICG…ELFS), 263 to 322 (PRCF…RQKR), 328 to 387 (EICS…KQIL), 388 to 447 (NICG…FFGR), and 448 to 505 (QCFK…LPKE). Residues 534–553 (ELKKERERAAKEKEKESKAK) form a disordered region.

It localises to the cytoplasm. It is found in the cell cortex. The protein localises to the cytoskeleton. Regulates and controls rearrangements of the actin cytoskeleton. Required for tip formation, morphogenesis, cell adhesion and motility, chemotaxis and aggregates formation. May function downstream of paxB. The sequence is that of LIM domain-containing protein B (limB) from Dictyostelium discoideum (Social amoeba).